The primary structure comprises 180 residues: MARVTVEDCIDKVESPYELVLVAKERAVQLNSGLEPTLDRDNDKNTVISLREIAADTIKVSDLTDSAIHKLRKHVEQVDDGTDDDEIIGDDFESMYKGEISKSGTPILPSKRARKIPEKIQVSSDDLEELTAKAEPEVDVDAELEVGDEETAVSLDQIAEAETEAETTEVNSDDSETTNS.

The disordered stretch occupies residues 100–180 (ISKSGTPILP…NSDDSETTNS (81 aa)). Composition is skewed to acidic residues over residues 137–151 (EVDVDAELEVGDEET) and 159–180 (AEAETEAETTEVNSDDSETTNS).

Belongs to the RNA polymerase subunit omega family. The RNAP catalytic core consists of 2 alpha, 1 beta, 1 beta' and 1 omega subunit. When a sigma factor is associated with the core the holoenzyme is formed, which can initiate transcription.

The catalysed reaction is RNA(n) + a ribonucleoside 5'-triphosphate = RNA(n+1) + diphosphate. Its function is as follows. Promotes RNA polymerase assembly. Latches the N- and C-terminal regions of the beta' subunit thereby facilitating its interaction with the beta and alpha subunits. The sequence is that of DNA-directed RNA polymerase subunit omega from Pelagibacter ubique (strain HTCC1062).